A 406-amino-acid chain; its full sequence is Tyrosine--tRNA ligase (406 aa).

Position 35 (Tyr35) interacts with L-tyrosine. The 'HIGH' region signature appears at 40–49; that stretch reads PTGPSLHIGH. L-tyrosine contacts are provided by Tyr168 and Gln172. Positions 228–232 match the 'KMSKS' region motif; sequence KMGKS. Lys231 contributes to the ATP binding site. The 67-residue stretch at 339-405 folds into the S4 RNA-binding domain; it reads IGIIDLFAEA…GKKRFMRIIF (67 aa).

Belongs to the class-I aminoacyl-tRNA synthetase family. TyrS type 1 subfamily. As to quaternary structure, homodimer.

Its subcellular location is the cytoplasm. It carries out the reaction tRNA(Tyr) + L-tyrosine + ATP = L-tyrosyl-tRNA(Tyr) + AMP + diphosphate + H(+). In terms of biological role, catalyzes the attachment of tyrosine to tRNA(Tyr) in a two-step reaction: tyrosine is first activated by ATP to form Tyr-AMP and then transferred to the acceptor end of tRNA(Tyr). This is Tyrosine--tRNA ligase from Treponema denticola (strain ATCC 35405 / DSM 14222 / CIP 103919 / JCM 8153 / KCTC 15104).